A 92-amino-acid polypeptide reads, in one-letter code: Large ribosomal subunit protein eL34 (92 aa).

The protein belongs to the eukaryotic ribosomal protein eL34 family.

The protein is Large ribosomal subunit protein eL34 of Staphylothermus marinus (strain ATCC 43588 / DSM 3639 / JCM 9404 / F1).